The chain runs to 591 residues: Ferric-chelate reductase 1 (591 aa).

Residues 6-26 (FTVSAFILLLHVSFVANYPSG) traverse the membrane as a helical segment. Residues 13 to 179 (LLLHVSFVAN…FTTPEATIAP (167 aa)) form the Reelin domain. N-linked (GlcNAc...) asparagine glycans are attached at residues asparagine 50, asparagine 85, asparagine 308, asparagine 321, and asparagine 353. The DOMON domain occupies 216–331 (ERACVLLSFT…ASYYIFVADG (116 aa)). Residues 335-533 (DGRIHKHSQQ…VGTEIILEIH (199 aa)) enclose the Cytochrome b561 domain. Residues 372 to 392 (VHGALMFVAWMTTVSVGVLIA) traverse the membrane as a helical segment. Heme b contacts are provided by histidine 373 and histidine 413. Transmembrane regions (helical) follow at residues 416–436 (LMLT…IYRG) and 445–465 (HPYL…LAAF). Heme b contacts are provided by histidine 445 and histidine 481. The next 3 membrane-spanning stretches (helical) occupy residues 490 to 510 (IIAV…LPGP), 514 to 534 (YAMI…EIHA), and 568 to 588 (VVLA…LSAI).

It belongs to the FRRS1 family. The cofactor is heme b.

The protein localises to the membrane. Ferric-chelate reductases reduce Fe(3+) to Fe(2+) before its transport from the endosome to the cytoplasm. This chain is Ferric-chelate reductase 1 (FRRS1), found in Bos taurus (Bovine).